We begin with the raw amino-acid sequence, 220 residues long: N-(5'-phosphoribosyl)anthranilate isomerase (220 aa).

Belongs to the TrpF family.

It catalyses the reaction N-(5-phospho-beta-D-ribosyl)anthranilate = 1-(2-carboxyphenylamino)-1-deoxy-D-ribulose 5-phosphate. The protein operates within amino-acid biosynthesis; L-tryptophan biosynthesis; L-tryptophan from chorismate: step 3/5. In Xylella fastidiosa (strain M12), this protein is N-(5'-phosphoribosyl)anthranilate isomerase.